A 401-amino-acid polypeptide reads, in one-letter code: MNEVVQTPAIQPLPKSAPTAGKQNLLDLDRAGLEKFFVEVLGEKKFRAHQVMKWIHHRYVTEFDEMTDLGKVLRAKLQEHAEVLVPNIVFDKPSADGTHKWLLAMGVDGKNAIETVYIPDKTRGTLCVSSQVGCGLNCTFCSTATQGFNRNLTTAEIIGQVWIAARHLGNVPHQMRRLTNVVMMGMGEPLMNFDNVVRAMSVMRDDLGYGLANKRVTLSTSGLVPQIDRLSTESDVSLAVSLHAPNDALRETLVPLNKKYPIAELMASCARYLRANKRRESVTFEYTLMKGINDKPEHARELARLMRQFDNAVQAKDSGKVNLIPFNPFPGTRYERSEEAHIRAFQKILLDSNVLTMVRRTRGDDIDAACGQLKGQVMDRTRRQAEFNKTLQAGKGSDAAA.

Catalysis depends on Glu114, which acts as the Proton acceptor. The Radical SAM core domain occupies 120–365 (DKTRGTLCVS…TMVRRTRGDD (246 aa)). Cys127 and Cys370 are joined by a disulfide. [4Fe-4S] cluster-binding residues include Cys134, Cys138, and Cys141. S-adenosyl-L-methionine contacts are provided by residues 187 to 188 (GE), Ser219, 241 to 243 (SLH), and Asn327. Cys370 functions as the S-methylcysteine intermediate in the catalytic mechanism.

Belongs to the radical SAM superfamily. RlmN family. [4Fe-4S] cluster is required as a cofactor.

Its subcellular location is the cytoplasm. The catalysed reaction is adenosine(2503) in 23S rRNA + 2 reduced [2Fe-2S]-[ferredoxin] + 2 S-adenosyl-L-methionine = 2-methyladenosine(2503) in 23S rRNA + 5'-deoxyadenosine + L-methionine + 2 oxidized [2Fe-2S]-[ferredoxin] + S-adenosyl-L-homocysteine. The enzyme catalyses adenosine(37) in tRNA + 2 reduced [2Fe-2S]-[ferredoxin] + 2 S-adenosyl-L-methionine = 2-methyladenosine(37) in tRNA + 5'-deoxyadenosine + L-methionine + 2 oxidized [2Fe-2S]-[ferredoxin] + S-adenosyl-L-homocysteine. Its function is as follows. Specifically methylates position 2 of adenine 2503 in 23S rRNA and position 2 of adenine 37 in tRNAs. m2A2503 modification seems to play a crucial role in the proofreading step occurring at the peptidyl transferase center and thus would serve to optimize ribosomal fidelity. This is Dual-specificity RNA methyltransferase RlmN from Stenotrophomonas maltophilia (strain R551-3).